We begin with the raw amino-acid sequence, 225 residues long: C-reactive protein (225 aa).

The first 19 residues, 1–19 (MAKLLLYFLLLTSLSDVFG), serve as a signal peptide directing secretion. A Pentraxin (PTX) domain is found at 24–225 (SKKTFVFPKE…EVFIKPQLWP (202 aa)). A disulfide bridge links C55 with C116. Residues N80, Q158, D159, and Q169 each coordinate Ca(2+).

This sequence belongs to the pentraxin family. Homopentamer. Pentraxin (or pentaxin) have a discoid arrangement of 5 non-covalently bound subunits. Interacts with FCN1; may regulate monocyte activation by FCN1. The cofactor is Ca(2+). As to expression, found in plasma.

It is found in the secreted. Functionally, displays several functions associated with host defense: it promotes agglutination, bacterial capsular swelling, phagocytosis and complement fixation through its calcium-dependent binding to phosphorylcholine. Can interact with DNA and histones and may scavenge nuclear material released from damaged circulating cells. The protein is C-reactive protein (CRP) of Cavia porcellus (Guinea pig).